A 336-amino-acid chain; its full sequence is Alpha-N-acetylgalactosaminide alpha-2,6-sialyltransferase 5 (336 aa).

The Cytoplasmic portion of the chain corresponds to 1 to 8 (MKTLMRHG). Residues 9-29 (LAVCLVLTTMCTSLLLVYSSL) traverse the membrane as a helical; Signal-anchor for type II membrane protein segment. The Lumenal segment spans residues 30-336 (GSQKERPPQQ…VNHAEGKPVF (307 aa)). Positions 34 to 76 (ERPPQQQQQQQQQQQQAATATGSTQLVESSPQPRRTAPAGPRQ) are disordered. The span at 38 to 49 (QQQQQQQQQQQQ) shows a compositional bias: low complexity. Residues 50-66 (AATATGSTQLVESSPQP) show a composition bias toward polar residues. A disulfide bond links cysteine 96 and cysteine 245. N-linked (GlcNAc...) asparagine glycans are attached at residues asparagine 137 and asparagine 161.

This sequence belongs to the glycosyltransferase 29 family. As to expression, high expression in forebrain and to a lesser extent in cerebellum. No expression in salivary gland, intestine, liver, kidney, heart, lung, thymus and spleen.

It localises to the golgi apparatus membrane. The enzyme catalyses a ganglioside GM1b (d18:1(4E)) + CMP-N-acetyl-beta-neuraminate = a ganglioside GD1alpha (d18:1(4E)) + CMP + H(+). The catalysed reaction is N-acetyl-alpha-neuraminosyl-(2-&gt;3)-beta-D-galactosyl-(1-&gt;3)-N-acetyl-beta-D-glucosaminyl-(1-&gt;3)-beta-D-galactosyl-(1-&gt;4)-beta-D-glucosyl-(1&lt;-&gt;1')-N-acyl-sphing-4-enine + CMP-N-acetyl-beta-neuraminate = N-acetyl-alpha-neuraminosyl-(2-&gt;3)-beta-D-galactosyl-(1-&gt;3)-[N-acetyl-alpha-neuraminosyl-(2-&gt;6)]-N-acetyl-beta-D-glucosaminyl-(1-&gt;3)-beta-D-galactosyl-(1-&gt;4)-beta-D-glucosyl-(1&lt;-&gt;1')-N-acyl-sphing-4-enine + CMP + H(+). It functions in the pathway glycolipid biosynthesis. Functionally, predominantly catalyzes the biosynthesis of ganglioside GD1alpha from GM1b in the brain, by transferring the sialyl group (N-acetyl-alpha-neuraminyl or NeuAc) from CMP-NeuAc to the GalNAc residue on the NeuAc-alpha-2,3-Gal-beta-1,3-GalNAc sequence of GM1b. GD1alpha is a critical molecule in the communication and interaction between neuronal cells and their supportive cells, particularly in brain tissues, and functions as an adhesion molecule in the process of metastasis. Also shows activity towards sialyl Lc4Cer (N-acetyl-alpha-neuraminosyl-(2-&gt;3)-beta-D-galactosyl-(1-&gt;3)-N-acetyl-beta-D-glucosaminyl-(1-&gt;3)-beta-D-galactosyl-(1-&gt;4)-beta-D-glucosyl-(1&lt;-&gt;1')-N-acyl-sphing-4-enine) generating disialyl Lc4Cer, which can lead to the synthesis of disialyl Lewis a (Le(a)), suggested to be a cancer-associated antigen. The polypeptide is Alpha-N-acetylgalactosaminide alpha-2,6-sialyltransferase 5 (St6galnac5) (Mus musculus (Mouse)).